Here is a 217-residue protein sequence, read N- to C-terminus: Cyclin-P2-1 (217 aa).

It belongs to the cyclin family. Cyclin U/P subfamily.

This is Cyclin-P2-1 (CYCP2-1) from Oryza sativa subsp. japonica (Rice).